A 182-amino-acid chain; its full sequence is Flightin (182 aa).

The segment covering 1–15 (MADEEDPWGFDDGGE) has biased composition (acidic residues). Positions 1–76 (MADEEDPWGF…PPPPEDDGYR (76 aa)) are disordered.

Several forms of flightin are thought to be produced through post-translational modifications, possibly by phosphorylation. Found only in indirect flight muscles (IFM).

Functionally, possibly involved in the regulation of flight muscles contraction, possibly by modulating actin-myosin interaction. This is Flightin (fln) from Drosophila melanogaster (Fruit fly).